The following is a 248-amino-acid chain: 2,3-bisphosphoglycerate-dependent phosphoglycerate mutase (248 aa).

Substrate contacts are provided by residues 8-15, 21-22, Arg-60, 87-90, Lys-98, 114-115, and 183-184; these read RHGESIWN, TG, EKHY, RR, and GN. Residue His-9 is the Tele-phosphohistidine intermediate of the active site. Glu-87 serves as the catalytic Proton donor/acceptor.

It belongs to the phosphoglycerate mutase family. BPG-dependent PGAM subfamily.

It carries out the reaction (2R)-2-phosphoglycerate = (2R)-3-phosphoglycerate. Its pathway is carbohydrate degradation; glycolysis; pyruvate from D-glyceraldehyde 3-phosphate: step 3/5. In terms of biological role, catalyzes the interconversion of 2-phosphoglycerate and 3-phosphoglycerate. The chain is 2,3-bisphosphoglycerate-dependent phosphoglycerate mutase from Parabacteroides distasonis (strain ATCC 8503 / DSM 20701 / CIP 104284 / JCM 5825 / NCTC 11152).